A 201-amino-acid polypeptide reads, in one-letter code: FMN-dependent NADH:quinone oxidoreductase (201 aa).

Position 92 to 95 (92 to 95 (MWNL)) interacts with FMN.

This sequence belongs to the azoreductase type 1 family. As to quaternary structure, homodimer. The cofactor is FMN.

It carries out the reaction 2 a quinone + NADH + H(+) = 2 a 1,4-benzosemiquinone + NAD(+). The catalysed reaction is N,N-dimethyl-1,4-phenylenediamine + anthranilate + 2 NAD(+) = 2-(4-dimethylaminophenyl)diazenylbenzoate + 2 NADH + 2 H(+). Its function is as follows. Quinone reductase that provides resistance to thiol-specific stress caused by electrophilic quinones. Functionally, also exhibits azoreductase activity. Catalyzes the reductive cleavage of the azo bond in aromatic azo compounds to the corresponding amines. The sequence is that of FMN-dependent NADH:quinone oxidoreductase from Caldicellulosiruptor bescii (strain ATCC BAA-1888 / DSM 6725 / KCTC 15123 / Z-1320) (Anaerocellum thermophilum).